The following is a 431-amino-acid chain: Adenylosuccinate synthetase (431 aa).

Residues 13–19 and 41–43 each bind GTP; these read GDEGKGK and GHT. The Proton acceptor role is filled by Asp-14. The Mg(2+) site is built by Asp-14 and Gly-41. Residues 14 to 17, 39 to 42, Thr-130, Arg-144, Gln-225, Thr-240, and Arg-304 contribute to the IMP site; these read DEGK and NAGH. His-42 (proton donor) is an active-site residue. Position 300 to 306 (300 to 306) interacts with substrate; that stretch reads ATTGRKR. GTP contacts are provided by residues Arg-306, 332–334, and 415–417; these read KLD and STG.

Belongs to the adenylosuccinate synthetase family. As to quaternary structure, homodimer. Mg(2+) is required as a cofactor.

It localises to the cytoplasm. The enzyme catalyses IMP + L-aspartate + GTP = N(6)-(1,2-dicarboxyethyl)-AMP + GDP + phosphate + 2 H(+). Its pathway is purine metabolism; AMP biosynthesis via de novo pathway; AMP from IMP: step 1/2. Functionally, plays an important role in the de novo pathway of purine nucleotide biosynthesis. Catalyzes the first committed step in the biosynthesis of AMP from IMP. The sequence is that of Adenylosuccinate synthetase from Shewanella oneidensis (strain ATCC 700550 / JCM 31522 / CIP 106686 / LMG 19005 / NCIMB 14063 / MR-1).